The sequence spans 155 residues: Small ribosomal subunit protein uS7c (155 aa).

This sequence belongs to the universal ribosomal protein uS7 family. As to quaternary structure, part of the 30S ribosomal subunit.

It is found in the plastid. The protein resides in the chloroplast. In terms of biological role, one of the primary rRNA binding proteins, it binds directly to 16S rRNA where it nucleates assembly of the head domain of the 30S subunit. This chain is Small ribosomal subunit protein uS7c (rps7), found in Ginkgo biloba (Ginkgo).